A 120-amino-acid chain; its full sequence is ATP-dependent Clp protease adapter protein ClpS (120 aa).

The interval Leu-9–Lys-32 is disordered.

It belongs to the ClpS family. As to quaternary structure, binds to the N-terminal domain of the chaperone ClpA.

In terms of biological role, involved in the modulation of the specificity of the ClpAP-mediated ATP-dependent protein degradation. This Ectopseudomonas mendocina (strain ymp) (Pseudomonas mendocina) protein is ATP-dependent Clp protease adapter protein ClpS.